A 1346-amino-acid chain; its full sequence is Zinc finger protein 541 (1346 aa).

Disordered regions lie at residues methionine 1 to asparagine 34 and glutamate 113 to glutamine 136. A compositionally biased stretch (polar residues) spans phenylalanine 21 to threonine 32. C2H2-type zinc fingers lie at residues leucine 140–histidine 162, histidine 168–histidine 190, and phenylalanine 196–histidine 220. Disordered stretches follow at residues alanine 235–histidine 271, valine 283–alanine 328, serine 437–leucine 472, and serine 578–arginine 744. 2 stretches are compositionally biased toward low complexity: residues proline 294–proline 323 and proline 440–glutamate 458. The segment covering proline 671–glycine 685 has biased composition (polar residues). Residues phenylalanine 838–histidine 860 form a C2H2-type 4 zinc finger. Positions alanine 931 to glutamine 971 are disordered. Residues glutamine 934–glutamine 948 are compositionally biased toward basic and acidic residues. Positions proline 1053–glycine 1145 constitute an ELM2 domain. Residues threonine 1160 to lysine 1211 form the SANT domain. Residues valine 1224–glycine 1281 are disordered. Residues threonine 1234–serine 1247 are compositionally biased toward basic and acidic residues. A compositionally biased stretch (basic residues) spans histidine 1248–serine 1258. The segment covering isoleucine 1264–serine 1273 has biased composition (polar residues). Residues phenylalanine 1289–histidine 1311 form a C2H2-type 5 zinc finger.

Interacts with DNTTIP1. Identified in a complex with KCDT19, HDAC1 and HSPA2. Component of a histone deacetylase complex containing DNTTIP1, ZNF541, HDAC1 and HDAC2. Identified in a complex with HDAC1, HDAC2, DNTTIP1 and KCTD19.

The protein localises to the nucleus. Transcription regulator which is essential for male fertility and for the completion of meiotic prophase in spermatocytes. Regulates progression of the pachytene stage of meiotic prophase by activating the expression of genes involved in meiosis during spermatogenesis. Maintains the repression of pre-pachytene transcriptional programs, including meiotic double-strand breaks (DSB) formation genes in pachytene spermatocytes and suppresses aberrant DSB formation after mid-pachytene, thus ensuring meiosis progression. In Homo sapiens (Human), this protein is Zinc finger protein 541 (ZNF541).